Reading from the N-terminus, the 341-residue chain is MTEQQPVAVLGGGSFGTAVANLLAENGVPVRQWMRDPAQAEAMRVNRENPRYLKGIRLHDGVEPVNDLLATLQASELIFVALPSSALRSVLAPHAELLRGKGLVSLTKGIEAQSFKLMSQILEEIAPEARIGVLSGPNLAREIAEHALTATVVASEHEDLCQQVQAVLHGRTFRVYASADRFGVELGGALKNVYAIIAGMAVALGMGENTKSMLITRALAEMTRFAVSQGANPMTFLGLAGVGDLIVTCSSPKSRNYQVGYALGQGQSLEEAVNRLGEVAEGVNTLKVLKTKAQQVQVYMPLVAGLHAILFEGRTLNQVIEHLMRAEPKTDVDFISISGFN.

Positions 14, 15, 35, and 108 each coordinate NADPH. Sn-glycerol 3-phosphate-binding residues include Lys-108 and Gly-136. Ala-140 contacts NADPH. Sn-glycerol 3-phosphate is bound by residues Lys-191, Asp-244, Ser-254, Arg-255, and Asn-256. Catalysis depends on Lys-191, which acts as the Proton acceptor. Residue Arg-255 participates in NADPH binding. 2 residues coordinate NADPH: Val-279 and Glu-281.

The protein belongs to the NAD-dependent glycerol-3-phosphate dehydrogenase family.

It localises to the cytoplasm. The catalysed reaction is sn-glycerol 3-phosphate + NAD(+) = dihydroxyacetone phosphate + NADH + H(+). It carries out the reaction sn-glycerol 3-phosphate + NADP(+) = dihydroxyacetone phosphate + NADPH + H(+). It functions in the pathway membrane lipid metabolism; glycerophospholipid metabolism. Its function is as follows. Catalyzes the reduction of the glycolytic intermediate dihydroxyacetone phosphate (DHAP) to sn-glycerol 3-phosphate (G3P), the key precursor for phospholipid synthesis. The sequence is that of Glycerol-3-phosphate dehydrogenase [NAD(P)+] from Pseudomonas putida (strain ATCC 47054 / DSM 6125 / CFBP 8728 / NCIMB 11950 / KT2440).